Reading from the N-terminus, the 154-residue chain is NADPH-dependent 7-cyano-7-deazaguanine reductase (154 aa).

The span at 1-21 (MPNTDVSSLSMLGQQTETAQS) shows a compositional bias: polar residues. A disordered region spans residues 1-28 (MPNTDVSSLSMLGQQTETAQSPEEAVLE). The active-site Thioimide intermediate is the Cys52. Catalysis depends on Asp59, which acts as the Proton donor. Substrate-binding positions include 74–76 (VES) and 93–94 (HE).

The protein belongs to the GTP cyclohydrolase I family. QueF type 1 subfamily.

Its subcellular location is the cytoplasm. It catalyses the reaction 7-aminomethyl-7-carbaguanine + 2 NADP(+) = 7-cyano-7-deazaguanine + 2 NADPH + 3 H(+). It participates in tRNA modification; tRNA-queuosine biosynthesis. Functionally, catalyzes the NADPH-dependent reduction of 7-cyano-7-deazaguanine (preQ0) to 7-aminomethyl-7-deazaguanine (preQ1). The protein is NADPH-dependent 7-cyano-7-deazaguanine reductase of Rhizobium johnstonii (strain DSM 114642 / LMG 32736 / 3841) (Rhizobium leguminosarum bv. viciae).